The sequence spans 400 residues: Phosphoglycerate kinase (400 aa).

Substrate is bound by residues 21 to 23 (DFN), Arg36, 59 to 62 (HLGR), Arg118, and Arg151. ATP-binding positions include Lys201, Gly293, Glu324, and 353–356 (GGDS).

The protein belongs to the phosphoglycerate kinase family. As to quaternary structure, monomer.

It is found in the cytoplasm. It carries out the reaction (2R)-3-phosphoglycerate + ATP = (2R)-3-phospho-glyceroyl phosphate + ADP. It functions in the pathway carbohydrate degradation; glycolysis; pyruvate from D-glyceraldehyde 3-phosphate: step 2/5. The protein is Phosphoglycerate kinase of Fervidobacterium nodosum (strain ATCC 35602 / DSM 5306 / Rt17-B1).